Here is a 338-residue protein sequence, read N- to C-terminus: Heat-inducible transcription repressor HrcA (338 aa).

Belongs to the HrcA family.

Functionally, negative regulator of class I heat shock genes (grpE-dnaK-dnaJ and groELS operons). Prevents heat-shock induction of these operons. The chain is Heat-inducible transcription repressor HrcA from Thermotoga sp. (strain RQ2).